The chain runs to 147 residues: Hemoglobin subunit beta (147 aa).

Val2 carries the post-translational modification N-acetylvaline. Residues 3 to 147 enclose the Globin domain; it reads HLTGEEKSAV…VANALAHKYH (145 aa). At Thr13 the chain carries Phosphothreonine. Position 45 is a phosphoserine (Ser45). Lys60 is modified (N6-acetyllysine). Residue His64 coordinates heme b. Lys83 carries the post-translational modification N6-acetyllysine. Position 93 (His93) interacts with heme b. Cys94 is subject to S-nitrosocysteine. Residue Lys145 is modified to N6-acetyllysine.

Belongs to the globin family. As to quaternary structure, heterotetramer of two alpha chains and two beta chains. In terms of tissue distribution, red blood cells.

In terms of biological role, involved in oxygen transport from the lung to the various peripheral tissues. The sequence is that of Hemoglobin subunit beta (HBB) from Ateles paniscus (Black spider monkey).